The sequence spans 285 residues: Ribosomal RNA small subunit methyltransferase I (285 aa).

The protein belongs to the methyltransferase superfamily. RsmI family.

The protein resides in the cytoplasm. The enzyme catalyses cytidine(1402) in 16S rRNA + S-adenosyl-L-methionine = 2'-O-methylcytidine(1402) in 16S rRNA + S-adenosyl-L-homocysteine + H(+). Functionally, catalyzes the 2'-O-methylation of the ribose of cytidine 1402 (C1402) in 16S rRNA. The chain is Ribosomal RNA small subunit methyltransferase I from Mycobacterium tuberculosis (strain CDC 1551 / Oshkosh).